We begin with the raw amino-acid sequence, 278 residues long: 4-deoxy-L-threo-5-hexosulose-uronate ketol-isomerase (278 aa).

4 residues coordinate Zn(2+): histidine 196, histidine 198, glutamate 203, and histidine 245.

The protein belongs to the KduI family. The cofactor is Zn(2+).

It catalyses the reaction 5-dehydro-4-deoxy-D-glucuronate = 3-deoxy-D-glycero-2,5-hexodiulosonate. It functions in the pathway glycan metabolism; pectin degradation; 2-dehydro-3-deoxy-D-gluconate from pectin: step 4/5. Catalyzes the isomerization of 5-dehydro-4-deoxy-D-glucuronate to 3-deoxy-D-glycero-2,5-hexodiulosonate. This Salmonella choleraesuis (strain SC-B67) protein is 4-deoxy-L-threo-5-hexosulose-uronate ketol-isomerase.